A 297-amino-acid chain; its full sequence is Oxidoreductase aprR (297 aa).

Belongs to the NmrA-type oxidoreductase family. Isoflavone reductase subfamily.

It participates in secondary metabolite biosynthesis. In terms of biological role, oxidoreductase; part of the gene cluster that mediates the biosynthesis of the asperipin-2a, a bicyclic peptide that possesses two macrocyclic ether rings consisting of 14- and 17-membered paracyclophans. The pathway starts with the processing of the precursor aprA by kexin proteases to produce 11 identical copies of the hexapeptide Phe-Tyr-Tyr-Thr-Gly-Tyr. Macrocyclization of asperipin-2a may accompany an alpha-hydroxylation-dehydration sequence to give an imine, which is readily hydrolyzed to yield putative ketone intermediate. The reductase aprR may be required for the final reduction to yield asperipin-2a. In Aspergillus flavus (strain ATCC 200026 / FGSC A1120 / IAM 13836 / NRRL 3357 / JCM 12722 / SRRC 167), this protein is Oxidoreductase aprR.